Here is a 444-residue protein sequence, read N- to C-terminus: Tubulin beta-9 chain (444 aa).

GTP-binding residues include Q11, E69, S138, G142, T143, G144, N204, and N226. E69 is a binding site for Mg(2+).

The protein belongs to the tubulin family. In terms of assembly, dimer of alpha and beta chains. A typical microtubule is a hollow water-filled tube with an outer diameter of 25 nm and an inner diameter of 15 nM. Alpha-beta heterodimers associate head-to-tail to form protofilaments running lengthwise along the microtubule wall with the beta-tubulin subunit facing the microtubule plus end conferring a structural polarity. Microtubules usually have 13 protofilaments but different protofilament numbers can be found in some organisms and specialized cells. Interacts with TFCA. It depends on Mg(2+) as a cofactor.

It localises to the cytoplasm. The protein localises to the cytoskeleton. Functionally, tubulin is the major constituent of microtubules, a cylinder consisting of laterally associated linear protofilaments composed of alpha- and beta-tubulin heterodimers. Microtubules grow by the addition of GTP-tubulin dimers to the microtubule end, where a stabilizing cap forms. Below the cap, tubulin dimers are in GDP-bound state, owing to GTPase activity of alpha-tubulin. The chain is Tubulin beta-9 chain (TUBB9) from Arabidopsis thaliana (Mouse-ear cress).